Consider the following 209-residue polypeptide: Guanylate kinase (209 aa).

A Guanylate kinase-like domain is found at G9–I188. Residue S16–T23 coordinates ATP.

It belongs to the guanylate kinase family.

The protein resides in the cytoplasm. It carries out the reaction GMP + ATP = GDP + ADP. Functionally, essential for recycling GMP and indirectly, cGMP. The protein is Guanylate kinase of Ehrlichia ruminantium (strain Gardel).